A 337-amino-acid chain; its full sequence is MDPRSEVILRQQDYLKGRVLLINAPNDALVSQLPTEIDASVWTWNYADYQGFLNAGATAHFSVEFPLQEFDQAIIFVPKSKELLNYILHVVMSHLKIDQSVFLVGEKKGGVERAAKQLQSFGKILKLDSARHCQLWHLKIEKTEKIKPLESWLKTYTVQVNEQELTICALPGVFSQTHLDVGTAVLLPYLNQVKSGRIADFGCGAGIISCYLAKANSSNIIHALDIDAFALQSTEMTFSRNGIGSDQLRLQPVTGIADAPTELDAIVSNPPFHQGIHTNYDASEGLCQNAKKHLKASGELWIVANRFLNYPILIEKHFGQCEIKTDLQGFKVLYACA.

The protein belongs to the methyltransferase superfamily. RsmC family. As to quaternary structure, monomer.

The protein resides in the cytoplasm. It carries out the reaction guanosine(1207) in 16S rRNA + S-adenosyl-L-methionine = N(2)-methylguanosine(1207) in 16S rRNA + S-adenosyl-L-homocysteine + H(+). Its function is as follows. Specifically methylates the guanine in position 1207 of 16S rRNA in the 30S particle. In Acinetobacter baumannii (strain ATCC 17978 / DSM 105126 / CIP 53.77 / LMG 1025 / NCDC KC755 / 5377), this protein is Ribosomal RNA small subunit methyltransferase C.